A 1044-amino-acid polypeptide reads, in one-letter code: Ras GTPase-activating protein 1 (1044 aa).

Residue Met1 is modified to N-acetylmethionine. The hydrophobic stretch occupies residues 1-160 (MMAAEAGGEE…DEGDSLDGPE (160 aa)). One can recognise an SH2 1 domain in the interval 178–269 (WYHGKLDRTI…LKGEKLLYPV (92 aa)). An SH3 domain is found at 276 to 338 (EDRRRVRAIL…VEDLVEEVGR (63 aa)). The SH2 2 domain occupies 348-438 (WFHGKISKQE…VEGYYLKEPV (91 aa)). A PH domain is found at 471 to 574 (NIVKKGYLLK…WMKGLQAFCN (104 aa)). In terms of domain architecture, C2 spans 574–687 (NLRKSSPGTS…QKGHATDEWF (114 aa)). The residue at position 612 (Tyr612) is a Phosphotyrosine. 2 repeats span residues 646-664 (PDIN…KSKD) and 665-683 (PDIL…GHAT). The region spanning 761 to 971 (KLESLLLCTL…HRMIMFLDEL (211 aa)) is the Ras-GAP domain. Position 828 is a phosphoserine (Ser828).

As to quaternary structure, interacts with SQSTM1. Interacts with SPSB1; the interaction does not promote degradation. Interacts with CAV2 (tyrosine phosphorylated form). Directly interacts with NCK1. Interacts with PDGFRB (tyrosine phosphorylated). Interacts (via SH2 domain) with the 'Tyr-9' phosphorylated form of PDPK1. Interacts with tyrosine-phosphorylated EPHB4. In terms of processing, phosphorylated by SRC and LCK. The phosphorylation SRC inhibits its ability to stimulate the Ras-GTPase activity, whereas phosphorylation by LCK does not display any effect on stimulation activity.

Its subcellular location is the cytoplasm. In terms of biological role, inhibitory regulator of the Ras-cyclic AMP pathway. Stimulates the GTPase of normal but not oncogenic Ras p21. This chain is Ras GTPase-activating protein 1 (RASA1), found in Bos taurus (Bovine).